The chain runs to 250 residues: Probable chemoreceptor glutamine deamidase CheD (250 aa).

This sequence belongs to the CheD family.

It carries out the reaction L-glutaminyl-[protein] + H2O = L-glutamyl-[protein] + NH4(+). Its function is as follows. Probably deamidates glutamine residues to glutamate on methyl-accepting chemotaxis receptors (MCPs), playing an important role in chemotaxis. The sequence is that of Probable chemoreceptor glutamine deamidase CheD from Paraburkholderia xenovorans (strain LB400).